Reading from the N-terminus, the 325-residue chain is Hydroxymethylglutaryl-CoA lyase, mitochondrial (325 aa).

The transit peptide at 1 to 27 directs the protein to the mitochondrion; it reads MATVRKAFPQRLVGLASLRAASTSSMG. Positions 33–300 constitute a Pyruvate carboxyltransferase domain; it reads VKIVEVGPRD…HTGVNLQKLL (268 aa). Arg-41 contributes to the substrate binding site. Asp-42 provides a ligand contact to a divalent metal cation. At Lys-48 the chain carries N6-acetyllysine; alternate. At Lys-48 the chain carries N6-succinyllysine; alternate. Residue Lys-111 is modified to N6-acetyllysine. N6-acetyllysine; alternate is present on residues Lys-137 and Lys-179. Lys-137 and Lys-179 each carry N6-succinyllysine; alternate. A divalent metal cation contacts are provided by His-233 and His-235. Cys-266 is a catalytic residue. Asn-275 is an a divalent metal cation binding site. A Microbody targeting signal motif is present at residues 323 to 325; it reads CKL. Lys-324 carries the post-translational modification N6-acetyllysine.

This sequence belongs to the HMG-CoA lyase family. As to quaternary structure, homodimer; disulfide-linked. Can also form homotetramers. In terms of tissue distribution, in suckling rat, highest levels in liver and in intestine. Lower levels in heart, kidney and cerebellum. Weak expression in brain cortex, medulla and midbrain. Levels decrease slightly during weaning.

It is found in the mitochondrion matrix. The protein localises to the peroxisome. It catalyses the reaction (3S)-3-hydroxy-3-methylglutaryl-CoA = acetoacetate + acetyl-CoA. It functions in the pathway metabolic intermediate metabolism; (S)-3-hydroxy-3-methylglutaryl-CoA degradation; acetoacetate from (S)-3-hydroxy-3-methylglutaryl-CoA: step 1/1. Its function is as follows. Mitochondrial 3-hydroxy-3-methylglutaryl-CoA lyase that catalyzes a cation-dependent cleavage of (S)-3-hydroxy-3-methylglutaryl-CoA into acetyl-CoA and acetoacetate, a key step in ketogenesis. Terminal step in leucine catabolism. Ketone bodies (beta-hydroxybutyrate, acetoacetate and acetone) are essential as an alternative source of energy to glucose, as lipid precursors and as regulators of metabolism. This chain is Hydroxymethylglutaryl-CoA lyase, mitochondrial (Hmgcl), found in Rattus norvegicus (Rat).